A 490-amino-acid chain; its full sequence is Betaine aldehyde dehydrogenase (490 aa).

Residue Asp-93 coordinates K(+). 150–152 (GAW) contacts NAD(+). Residue Lys-162 is the Charge relay system of the active site. 176-179 (KPSE) contributes to the NAD(+) binding site. Residue Val-180 coordinates K(+). 230-233 (GIAS) contacts NAD(+). Leu-246 serves as a coordination point for K(+). Catalysis depends on Glu-252, which acts as the Proton acceptor. Positions 254, 286, and 387 each coordinate NAD(+). Cys-286 functions as the Nucleophile in the catalytic mechanism. At Cys-286 the chain carries Cysteine sulfenic acid (-SOH). Positions 457 and 460 each coordinate K(+). Glu-464 functions as the Charge relay system in the catalytic mechanism.

It belongs to the aldehyde dehydrogenase family. In terms of assembly, dimer of dimers. The cofactor is K(+).

The catalysed reaction is betaine aldehyde + NAD(+) + H2O = glycine betaine + NADH + 2 H(+). The protein operates within amine and polyamine biosynthesis; betaine biosynthesis via choline pathway; betaine from betaine aldehyde: step 1/1. Involved in the biosynthesis of the osmoprotectant glycine betaine. Catalyzes the irreversible oxidation of betaine aldehyde to the corresponding acid. The chain is Betaine aldehyde dehydrogenase from Yersinia pseudotuberculosis serotype I (strain IP32953).